The primary structure comprises 167 residues: Photosystem I assembly protein Ycf3 (167 aa).

3 TPR repeats span residues 35 to 68 (AFTY…EIDP), 72 to 105 (SYIL…NPSL), and 120 to 153 (GEQA…APSN).

This sequence belongs to the Ycf3 family.

It is found in the plastid. The protein resides in the chloroplast thylakoid membrane. Functionally, essential for the assembly of the photosystem I (PSI) complex. May act as a chaperone-like factor to guide the assembly of the PSI subunits. The chain is Photosystem I assembly protein Ycf3 from Marchantia polymorpha (Common liverwort).